Here is a 263-residue protein sequence, read N- to C-terminus: 3-deoxy-manno-octulosonate cytidylyltransferase 1 (263 aa).

It belongs to the KdsB family.

The protein localises to the cytoplasm. It catalyses the reaction 3-deoxy-alpha-D-manno-oct-2-ulosonate + CTP = CMP-3-deoxy-beta-D-manno-octulosonate + diphosphate. Its pathway is nucleotide-sugar biosynthesis; CMP-3-deoxy-D-manno-octulosonate biosynthesis; CMP-3-deoxy-D-manno-octulosonate from 3-deoxy-D-manno-octulosonate and CTP: step 1/1. It functions in the pathway bacterial outer membrane biogenesis; lipopolysaccharide biosynthesis. In terms of biological role, activates KDO (a required 8-carbon sugar) for incorporation into bacterial lipopolysaccharide in Gram-negative bacteria. The chain is 3-deoxy-manno-octulosonate cytidylyltransferase 1 from Burkholderia ambifaria (strain ATCC BAA-244 / DSM 16087 / CCUG 44356 / LMG 19182 / AMMD) (Burkholderia cepacia (strain AMMD)).